Consider the following 382-residue polypeptide: Mucosal addressin cell adhesion molecule 1 (382 aa).

An N-terminal signal peptide occupies residues 1-18; the sequence is MDFGLALLLAGLLGLLLG. At 19–317 the chain is on the extracellular side; that stretch reads QSLQVKPLQV…TGSSKPAGDQ (299 aa). Ig-like domains follow at residues 23–112 and 113–231; these read VKPL…LLVY and AFPD…TSPE. Disulfide bonds link cysteine 47–cysteine 94, cysteine 51–cysteine 98, and cysteine 134–cysteine 204. A glycan (N-linked (GlcNAc...) asparagine) is linked at asparagine 83. Residues 223 to 314 are disordered; the sequence is VLHSPTSPEP…VIPTGSSKPA (92 aa). A mucin-like region spans residues 226 to 317; it reads SPTSPEPPDT…TGSSKPAGDQ (92 aa). One copy of the 1; truncated repeat lies at 228 to 231; that stretch reads TSPE. The interval 228–271 is 5.5 X 8 AA tandem repeats of [PS]-P-D-T-T-S-[QP]-E; that stretch reads TSPEPPDTTSPESPDTTSPESPDTTSQEPPDTTSPEPPDKTSPE. 5 repeat units span residues 232–239, 240–247, 248–255, 256–263, and 264–271. Low complexity predominate over residues 236–261; sequence TSPESPDTTSPESPDTTSQEPPDTTS. Residues 277–288 show a composition bias toward low complexity; it reads GSTHTPRSPGST. Residues 318 to 338 form a helical membrane-spanning segment; that stretch reads LPAALWTSSAVLGLLLLALPT. The Cytoplasmic portion of the chain corresponds to 339 to 382; sequence YHLWKRCRHLAEDDTHPPASLRLLPQVSAWAGLRGTGQVGISPS.

Homodimer. Post-translationally, the Ser/Thr-rich mucin-like domain may provide possible sites for O-glycosylation. In terms of tissue distribution, highly expressed on high endothelial venules (HEV) and lamina propia venules found in the small intestine, and to a lesser extent in the colon and spleen. Very low levels of expression found in pancreas and brain. Not expressed in the thymus, prostate, ovaries, testis, heart, placenta, lung, liver, skeletal muscle, kidney or peripheral blood leukocytes.

Its subcellular location is the membrane. Cell adhesion leukocyte receptor expressed by mucosal venules, helps to direct lymphocyte traffic into mucosal tissues including the Peyer patches and the intestinal lamina propria. It can bind both integrin alpha-4/beta-7 and L-selectin, regulating both the passage and retention of leukocytes. Isoform 2, lacking the mucin-like domain, may be specialized in supporting integrin alpha-4/beta-7-dependent adhesion strengthening, independent of L-selectin binding. In Homo sapiens (Human), this protein is Mucosal addressin cell adhesion molecule 1 (MADCAM1).